The sequence spans 898 residues: Chitin synthase 1 (898 aa).

A disordered region spans residues M1 to R154. Positions P9–P21 are enriched in pro residues. 2 stretches are compositionally biased toward polar residues: residues D64–D75 and D136–P146. Helical transmembrane passes span S441–L461, R540–L560, F570–I590, I616–S636, and M651–V671. Residue N685 is glycosylated (N-linked (GlcNAc...) asparagine). Helical transmembrane passes span M697–L717, F726–C746, G825–A845, and I870–L890.

This sequence belongs to the chitin synthase family. Class I subfamily.

Its subcellular location is the cell membrane. It carries out the reaction [(1-&gt;4)-N-acetyl-beta-D-glucosaminyl](n) + UDP-N-acetyl-alpha-D-glucosamine = [(1-&gt;4)-N-acetyl-beta-D-glucosaminyl](n+1) + UDP + H(+). Polymerizes chitin, a structural polymer of the cell wall and septum, by transferring the sugar moiety of UDP-GlcNAc to the non-reducing end of the growing chitin polymer. Shows additive effects in septum formation with CHS2, CHS3A, CHS4, CHS5, CHS6 and CHS7. Regulates mycelial growth and conidiation. Involved in virulence and mediates mycotoxin deoxinivalenol (DON) biosynthesis via the regulation of the expression of TRI4, TRI5 and TRI6. The sequence is that of Chitin synthase 1 from Gibberella zeae (strain ATCC MYA-4620 / CBS 123657 / FGSC 9075 / NRRL 31084 / PH-1) (Wheat head blight fungus).